We begin with the raw amino-acid sequence, 528 residues long: Na(+)/H(+) antiporter NhaB (528 aa).

Transmembrane regions (helical) follow at residues 23–43 (VAIIAFLIINPIVFFLIDPFV), 45–65 (GWLLVAEFIFTLAMALKCYPL), 90–110 (LVANIEVLLLLVFMVAGIYFM), 136–156 (CFAAAFLSAFLDALTVIAVVI), 204–224 (LLMHAGVGTALGGVTTMVGEP), 242–262 (IRMAPVTLPVFFCGLITCAIV), 305–325 (GLIAVWLIAALALHLAAVGLI), 350–370 (EEALPFTALLAVFFAVVAVII), 392–412 (LALFYVANGLLSMVSDNVFVG), 450–470 (ATPNGQAAFLFLLTSALAPLI), and 479–499 (IMALPYTIVLAIVGLMGIMFF).

The protein belongs to the NhaB Na(+)/H(+) (TC 2.A.34) antiporter family.

The protein resides in the cell inner membrane. It catalyses the reaction 2 Na(+)(in) + 3 H(+)(out) = 2 Na(+)(out) + 3 H(+)(in). In terms of biological role, na(+)/H(+) antiporter that extrudes sodium in exchange for external protons. The protein is Na(+)/H(+) antiporter NhaB of Vibrio campbellii (strain ATCC BAA-1116).